The sequence spans 349 residues: Protein-glutamate methylesterase/protein-glutamine glutaminase (349 aa).

A Response regulatory domain is found at 5 to 122 (RVLCVDDSAL…REGMLAYSEL (118 aa)). At D56 the chain carries 4-aspartylphosphate. A CheB-type methylesterase domain is found at 152-344 (LLSSEKLIAI…QRMLAQISSG (193 aa)). Active-site residues include S164, H190, and D286.

This sequence belongs to the CheB family. In terms of processing, phosphorylated by CheA. Phosphorylation of the N-terminal regulatory domain activates the methylesterase activity.

It is found in the cytoplasm. It catalyses the reaction [protein]-L-glutamate 5-O-methyl ester + H2O = L-glutamyl-[protein] + methanol + H(+). It carries out the reaction L-glutaminyl-[protein] + H2O = L-glutamyl-[protein] + NH4(+). Involved in chemotaxis. Part of a chemotaxis signal transduction system that modulates chemotaxis in response to various stimuli. Catalyzes the demethylation of specific methylglutamate residues introduced into the chemoreceptors (methyl-accepting chemotaxis proteins or MCP) by CheR. Also mediates the irreversible deamidation of specific glutamine residues to glutamic acid. This is Protein-glutamate methylesterase/protein-glutamine glutaminase from Yersinia pestis bv. Antiqua (strain Antiqua).